A 403-amino-acid chain; its full sequence is Cell cycle checkpoint control protein RAD9B (403 aa).

The segment at 285–347 (PLSQARRSHP…ASAGQDDIFE (63 aa)) is disordered. Phosphoserine occurs at positions 354 and 363.

The protein belongs to the rad9 family. As to quaternary structure, interacts with HUS1, HUS1B, RAD1, RAD9A and RAD17.

This chain is Cell cycle checkpoint control protein RAD9B (Rad9b), found in Mus musculus (Mouse).